Here is a 98-residue protein sequence, read N- to C-terminus: NADH-ubiquinone oxidoreductase chain 4L (98 aa).

The next 3 helical transmembrane spans lie at 1–21 (MTSI…GVLM), 28–48 (STLL…SLLI), and 59–79 (APLI…ALLV).

It belongs to the complex I subunit 4L family. Core subunit of respiratory chain NADH dehydrogenase (Complex I) which is composed of 45 different subunits.

It is found in the mitochondrion inner membrane. The enzyme catalyses a ubiquinone + NADH + 5 H(+)(in) = a ubiquinol + NAD(+) + 4 H(+)(out). Functionally, core subunit of the mitochondrial membrane respiratory chain NADH dehydrogenase (Complex I) which catalyzes electron transfer from NADH through the respiratory chain, using ubiquinone as an electron acceptor. Part of the enzyme membrane arm which is embedded in the lipid bilayer and involved in proton translocation. The sequence is that of NADH-ubiquinone oxidoreductase chain 4L (MT-ND4L) from Phascolarctos cinereus (Koala).